Reading from the N-terminus, the 1675-residue chain is Coadhesin (1675 aa).

Residues 1 to 1356 (QGNYYSYGGT…TIADQADAAK (1356 aa)) are Extracellular-facing. Residues 11-160 (TPGTPIGCTN…ICMRVGVESC (150 aa)) enclose the F5/8 type C 1 domain. TSP type-1 domains lie at 168 to 220 (NGAW…NDCV), 224 to 279 (NGGW…QFCP), 281 to 336 (DGGW…QCCP), 338 to 393 (HGGW…QTCP), 403 to 458 (NGNY…IPCP), 460 to 515 (NGNW…TACP), and 517 to 572 (DGGW…GPCP). Disulfide bonds link Cys-180/Cys-216, Cys-184/Cys-219, Cys-194/Cys-206, Cys-236/Cys-273, Cys-240/Cys-278, Cys-251/Cys-263, Cys-293/Cys-330, Cys-297/Cys-335, Cys-308/Cys-320, Cys-350/Cys-387, Cys-354/Cys-392, Cys-365/Cys-377, Cys-415/Cys-452, Cys-419/Cys-457, Cys-430/Cys-442, Cys-472/Cys-509, Cys-476/Cys-514, Cys-487/Cys-499, Cys-528/Cys-566, Cys-532/Cys-571, and Cys-543/Cys-555. Residues 567–588 (NKGPCPTSPPTISPPTTGSPAD) are disordered. 3 VWFA domains span residues 595–769 (DLVF…MDRI), 778–958 (DIGF…FKAL), and 966–1141 (DLTF…ISII). The region spanning 1144 to 1198 (PSGLSKWSSWSACSKTCRYLGKAGTQIRTRDCKIPELGCDGMRIDTVECNKMDCE) is the TSP type-1 8 domain. Cystine bridges form between Cys-1156/Cys-1192, Cys-1160/Cys-1197, and Cys-1175/Cys-1182. Residues 1192 to 1336 (CNKMDCEGCG…PCMQAAVFGC (145 aa)) enclose the F5/8 type C 2 domain. A helical transmembrane segment spans residues 1357-1377 (GILIVLWILAGILTFLLLMAC). The Cytoplasmic portion of the chain corresponds to 1378-1675 (CYYCCWHVCC…RGEEWYSRWG (298 aa)). Residues 1463–1480 (EKHVTAEDVKSEKPKYSE) are compositionally biased toward basic and acidic residues. Residues 1463 to 1491 (EKHVTAEDVKSEKPKYSEEASSGTIKSGS) form a disordered region. A compositionally biased stretch (polar residues) spans 1481–1491 (EASSGTIKSGS).

Component of the acid-insoluble and acid-soluble organic matrix of the aragonitic skeleton (at protein level).

The protein resides in the membrane. This chain is Coadhesin, found in Acropora millepora (Staghorn coral).